The sequence spans 237 residues: Sugar fermentation stimulation protein homolog (237 aa).

Belongs to the SfsA family.

This chain is Sugar fermentation stimulation protein homolog, found in Pseudomonas fluorescens (strain Pf0-1).